The chain runs to 630 residues: Phosphomethylpyrimidine synthase (630 aa).

Disordered regions lie at residues 1-22 (MADI…TTGP) and 97-120 (AQRE…VPAF). Substrate is bound by residues N224, M253, Y282, H318, 338 to 340 (SRG), 379 to 382 (DGLR), and E418. Residue H422 participates in Zn(2+) binding. Y445 contributes to the substrate binding site. Position 486 (H486) interacts with Zn(2+). 3 residues coordinate [4Fe-4S] cluster: C566, C569, and C574.

This sequence belongs to the ThiC family. Homodimer. [4Fe-4S] cluster serves as cofactor.

The enzyme catalyses 5-amino-1-(5-phospho-beta-D-ribosyl)imidazole + S-adenosyl-L-methionine = 4-amino-2-methyl-5-(phosphooxymethyl)pyrimidine + CO + 5'-deoxyadenosine + formate + L-methionine + 3 H(+). It participates in cofactor biosynthesis; thiamine diphosphate biosynthesis. Its function is as follows. Catalyzes the synthesis of the hydroxymethylpyrimidine phosphate (HMP-P) moiety of thiamine from aminoimidazole ribotide (AIR) in a radical S-adenosyl-L-methionine (SAM)-dependent reaction. This chain is Phosphomethylpyrimidine synthase, found in Sphingopyxis alaskensis (strain DSM 13593 / LMG 18877 / RB2256) (Sphingomonas alaskensis).